The following is a 373-amino-acid chain: Methylmalonyl-CoA decarboxylase subunit beta (373 aa).

A run of 10 helical transmembrane segments spans residues 17 to 37 (FLAF…LLYL), 38 to 58 (AFAR…CLLA), 81 to 101 (IFPP…PLIA), 106 to 126 (LLLG…AMML), 132 to 152 (EAAA…YLAT), 156 to 176 (PHLL…VPLI), 206 to 226 (IVFP…ITSL), 257 to 277 (VTIF…FLSL), 280 to 300 (IKII…GVLF), and 343 to 363 (FLLM…AVAA).

This sequence belongs to the GcdB/MmdB/OadB family. The methylmalonyl-CoA decarboxylase is composed of five subunits: the carboxyltransferase alpha subunit (MmdA), the tunnel beta subunit (MmdB), the biotin-containing gamma subunit (MmdC), and the delta (MmdD) and epsilon (MmdE) subunits. Post-translationally, the N-terminus is blocked.

It is found in the cell membrane. It catalyses the reaction (S)-methylmalonyl-CoA + Na(+)(in) + H(+)(out) = propanoyl-CoA + Na(+)(out) + CO2. Its activity is regulated as follows. Completely inhibited by avidin. Functionally, tunnel subunit of the sodium ion pump methylmalonyl-CoA decarboxylase, which converts the chemical energy of a decarboxylation reaction into an electrochemical gradient of Na(+) ions across the cytoplasmic membrane, thereby creating a sodium ion motive force that is used for ATP synthesis. The beta subunit catalyzes the decarboxylation of the carboxybiotin carrier protein and the coupled export of Na(+) ions. Can also convert malonyl-CoA into acetyl-CoA. The polypeptide is Methylmalonyl-CoA decarboxylase subunit beta (Veillonella parvula (Staphylococcus parvulus)).